The primary structure comprises 331 residues: UBX domain-containing protein 2B (331 aa).

2 disordered regions span residues 1-26 (MAEGGGAEPEEQERRSSRPRPPSARD) and 38-63 (EMKCKSSKPDRSTATAFKSPRTPPLR). Alanine 2 carries the post-translational modification N-acetylalanine. Positions 38 to 48 (EMKCKSSKPDR) are enriched in basic and acidic residues. Serine 56 carries the post-translational modification Phosphoserine. Threonine 59 carries the phosphothreonine modification. At serine 66 the chain carries Phosphoserine. Residues 141-206 (DVQILLRLWS…MEDHQDQEYI (66 aa)) form the SEP domain. Phosphoserine is present on residues serine 231, serine 234, and serine 235. Residues 252 to 329 (DSVPTTKIQI…DILNTVILQQ (78 aa)) form the UBX domain.

Belongs to the NSFL1C family. Interacts with VCP. Does not bind ubiquitin. In terms of tissue distribution, present at high level in brain. Also present in liver, kidney, spleen, testis, lung and heart (at protein level).

It localises to the nucleus. It is found in the cytoplasm. The protein resides in the cytosol. The protein localises to the endoplasmic reticulum. Its subcellular location is the golgi apparatus. It localises to the cytoskeleton. It is found in the microtubule organizing center. The protein resides in the centrosome. Functionally, adapter protein required for Golgi and endoplasmic reticulum biogenesis. Involved in Golgi and endoplasmic reticulum maintenance during interphase and in their reassembly at the end of mitosis. The complex formed with VCP has membrane fusion activity; membrane fusion activity requires USO1-GOLGA2 tethering and BET1L. VCPIP1 is also required, but not its deubiquitinating activity. Together with NSFL1C/p47, regulates the centrosomal levels of kinase AURKA/Aurora A during mitotic progression by promoting AURKA removal from centrosomes in prophase. Also, regulates spindle orientation during mitosis. The sequence is that of UBX domain-containing protein 2B (Ubxn2b) from Rattus norvegicus (Rat).